Reading from the N-terminus, the 758-residue chain is Translation initiation factor IF-2 (758 aa).

A disordered region spans residues 55 to 168 (EKNVGKQATQ…KTHQPSIPVK (114 aa)). Polar residues-rich tracts occupy residues 60–78 (KQAT…QQNH) and 86–95 (QRQQSATSKP). Residues 96–136 (KVNNQQHSNSSNEKSKNTKGNQNRNMTQNNNNNNNNNNNNR) show a composition bias toward low complexity. Positions 259–428 (ERPPVVTIMG…LLVAEVGELK (170 aa)) constitute a tr-type G domain. Residues 268–275 (GHVDHGKT) are G1. 268 to 275 (GHVDHGKT) contacts GTP. The interval 293-297 (GITQH) is G2. A G3 region spans residues 314–317 (DTPG). Residues 314-318 (DTPGH) and 368-371 (NKMD) each bind GTP. Positions 368–371 (NKMD) are G4. A G5 region spans residues 404 to 406 (SAL).

The protein belongs to the TRAFAC class translation factor GTPase superfamily. Classic translation factor GTPase family. IF-2 subfamily.

The protein resides in the cytoplasm. Its function is as follows. One of the essential components for the initiation of protein synthesis. Protects formylmethionyl-tRNA from spontaneous hydrolysis and promotes its binding to the 30S ribosomal subunits. Also involved in the hydrolysis of GTP during the formation of the 70S ribosomal complex. In Lysinibacillus sphaericus (strain C3-41), this protein is Translation initiation factor IF-2.